The following is an 88-amino-acid chain: Small ribosomal subunit protein uS17 (88 aa).

Belongs to the universal ribosomal protein uS17 family. Part of the 30S ribosomal subunit.

In terms of biological role, one of the primary rRNA binding proteins, it binds specifically to the 5'-end of 16S ribosomal RNA. The polypeptide is Small ribosomal subunit protein uS17 (Azotobacter vinelandii (strain DJ / ATCC BAA-1303)).